The chain runs to 331 residues: Ferredoxin--NADP reductase 2 (331 aa).

FAD is bound by residues glutamate 37, glutamine 45, tyrosine 50, valine 90, phenylalanine 124, aspartate 286, and threonine 327.

This sequence belongs to the ferredoxin--NADP reductase type 2 family. Homodimer. FAD is required as a cofactor.

It catalyses the reaction 2 reduced [2Fe-2S]-[ferredoxin] + NADP(+) + H(+) = 2 oxidized [2Fe-2S]-[ferredoxin] + NADPH. The sequence is that of Ferredoxin--NADP reductase 2 from Listeria innocua serovar 6a (strain ATCC BAA-680 / CLIP 11262).